The sequence spans 525 residues: BTB/POZ domain-containing protein At1g50280 (525 aa).

A BTB domain is found at 5–79 (NDLKINLNGQ…CYHNGEILID (75 aa)). The NPH3 domain maps to 200–466 (EWWFEDMTNL…IEALKSRCGN (267 aa)).

It belongs to the NPH3 family.

The protein operates within protein modification; protein ubiquitination. Its function is as follows. May act as a substrate-specific adapter of an E3 ubiquitin-protein ligase complex (CUL3-RBX1-BTB) which mediates the ubiquitination and subsequent proteasomal degradation of target proteins. The sequence is that of BTB/POZ domain-containing protein At1g50280 from Arabidopsis thaliana (Mouse-ear cress).